A 935-amino-acid chain; its full sequence is Progesterone receptor (935 aa).

The AF3; mediates transcriptional activation stretch occupies residues 1–164 (MTELKAKGPR…PATQGVLSPL (164 aa)). The segment at 1–254 (MTELKAKGPR…GGAAAGGGAA (254 aa)) is disordered. Residues 1 to 568 (MTELKAKGPR…YSFESLPQKI (568 aa)) form a modulating, Pro-Rich region. Phosphoserine is present on Ser20. The LXXL motif 1 motif lies at 55–59 (LDGLL). Ser81 bears the Phosphoserine mark. The LXXL motif 2 signature appears at 115–119 (LDTLL). Ser130 and Ser162 each carry phosphoserine. The segment at 165–305 (MSRSGGKAGD…LATTVMDFIH (141 aa)) is mediates transcriptional transrepression. The Nuclear localization signal motif lies at 183 to 187 (KVLPR). Residues Ser190 and Ser213 each carry the phosphoserine modification. The segment covering 220 to 231 (EVEEEDGSESED) has biased composition (acidic residues). Over residues 232–246 (SAGPLLKGKPRALGG) the composition is skewed to low complexity. A Phosphoserine; by MAPK1 modification is found at Ser294. The segment at 331 to 378 (GGAGAASAFAPPRSSPSASSTPVAVGDFPDCAYPPDAEPKDDAYPLYS) is disordered. Low complexity predominate over residues 335 to 350 (AASAFAPPRSSPSASS). The residue at position 345 (Ser345) is a Phosphoserine; by MAPK. Residue Lys388 forms a Glycyl lysine isopeptide (Lys-Gly) (interchain with G-Cter in SUMO); alternate linkage. A Glycyl lysine isopeptide (Lys-Gly) (interchain with G-Cter in ubiquitin); alternate cross-link involves residue Lys388. At Ser400 the chain carries Phosphoserine; by CDK2. A compositionally biased stretch (pro residues) spans 418 to 430 (PLGPPPPLPPRAP). The segment at 418-438 (PLGPPPPLPPRAPPTRAGEAA) is disordered. The AF1; mediates transcriptional activation stretch occupies residues 456-548 (STLECILYKA…VYPPYLNYLR (93 aa)). Residue Lys533 forms a Glycyl lysine isopeptide (Lys-Gly) (interchain with G-Cter in SUMO) linkage. 2 consecutive NR C4-type zinc fingers follow at residues 569–589 (CLIC…CGSC) and 605–629 (CAGR…LRKC). A DNA-binding region (nuclear receptor) is located at residues 569–641 (CLICGDEASG…AGMVLGGRKF (73 aa)). Ser678 is subject to Phosphoserine. In terms of domain architecture, NR LBD spans 681–915 (QDIQLIPPLI…EFPEMMSEVI (235 aa)). The AF2; mediates transcriptional activation stretch occupies residues 689–935 (LINLLMSIEP…MVKPLLFHKK (247 aa)).

The protein belongs to the nuclear hormone receptor family. In terms of assembly, interacts with SMARD1 and UNC45A. Interacts with CUEDC2; the interaction promotes ubiquitination, decreases sumoylation, and represses transcriptional activity. Interacts with PIAS3; the interaction promotes sumoylation of PR in a hormone-dependent manner, inhibits DNA-binding, and alters nuclear export. Interacts with SP1; the interaction requires ligand-induced phosphorylation on Ser-345 by ERK1/2-MAPK. Interacts with PRMT2. Interacts with NCOA2 and NCOA1. Interacts with KLF9. Interacts with GTF2B. In terms of processing, phosphorylated on multiple serine sites. Several of these sites are hormone-dependent. Phosphorylation on Ser-294 is highly hormone-dependent and modulates ubiquitination and sumoylation on Lys-388. Phosphorylation on Ser-102 and Ser-345 also requires induction by hormone. Basal phosphorylation on Ser-81, Ser-162, Ser-190 and Ser-400 is increased in response to progesterone and can be phosphorylated in vitro by the CDK2-A1 complex. Increased levels of phosphorylation on Ser-400 also in the presence of EGF, heregulin, IGF, PMA and FBS. Phosphorylation at this site by CDK2 is ligand-independent, and increases nuclear translocation and transcriptional activity. Phosphorylation at Ser-162 and Ser-294, but not at Ser-190, is impaired during the G(2)/M phase of the cell cycle. Phosphorylation on Ser-345 by ERK1/2 MAPK is required for interaction with SP1. Post-translationally, sumoylation is hormone-dependent and represses transcriptional activity. Sumoylation on all three sites is enhanced by PIAS3. Desumoylated by SENP1. Sumoylation on Lys-388, the main site of sumoylation, is repressed by ubiquitination on the same site, and modulated by phosphorylation at Ser-294. Ubiquitination is hormone-dependent and represses sumoylation on the same site. Promoted by MAPK-mediated phosphorylation on Ser-294. In terms of processing, palmitoylated by ZDHHC7 and ZDHHC21. Palmitoylation is required for plasma membrane targeting and for rapid intracellular signaling via ERK and AKT kinases and cAMP generation.

The protein resides in the nucleus. It localises to the cytoplasm. In terms of biological role, the steroid hormones and their receptors are involved in the regulation of eukaryotic gene expression and affect cellular proliferation and differentiation in target tissues. Transcriptional activator of several progesteron-dependent promoters in a variety of cell types. Involved in activation of SRC-dependent MAPK signaling on hormone stimulation. The sequence is that of Progesterone receptor (PGR) from Pongo pygmaeus (Bornean orangutan).